Consider the following 298-residue polypeptide: NFU1 iron-sulfur cluster scaffold homolog, mitochondrial (298 aa).

The tract at residues 190–258 is nifU; sequence IKELLDTRIR…IPEVESVEQV (69 aa). Cys227 and Cys230 together coordinate [4Fe-4S] cluster. The segment covering 279 to 288 has biased composition (polar residues); it reads QKESVNQPNA. The segment at 279–298 is disordered; the sequence is QKESVNQPNAPVNIGGGTPN.

This sequence belongs to the NifU family.

The protein resides in the mitochondrion. In terms of biological role, molecular scaffold for [Fe-S] cluster assembly of mitochondrial iron-sulfur proteins. In Drosophila virilis (Fruit fly), this protein is NFU1 iron-sulfur cluster scaffold homolog, mitochondrial.